Here is a 947-residue protein sequence, read N- to C-terminus: Protein translocase subunit SecA (947 aa).

ATP is bound by residues glutamine 87, 105-109 (GEGKT), and aspartate 494. The disordered stretch occupies residues 860–947 (TAPKPLPTQE…NRAPKSKRKR (88 aa)). Positions 870-885 (AAARTTGTAAPTALRA) are enriched in low complexity. 2 stretches are compositionally biased toward basic and acidic residues: residues 903-914 (EDGKAKATRDSA) and 922-931 (ASRRERREAA).

This sequence belongs to the SecA family. As to quaternary structure, monomer and homodimer. Part of the essential Sec protein translocation apparatus which comprises SecA, SecYEG and auxiliary proteins SecDF. Other proteins may also be involved.

It is found in the cell membrane. It localises to the cytoplasm. It carries out the reaction ATP + H2O + cellular proteinSide 1 = ADP + phosphate + cellular proteinSide 2.. Functionally, part of the Sec protein translocase complex. Interacts with the SecYEG preprotein conducting channel. Has a central role in coupling the hydrolysis of ATP to the transfer of proteins into and across the cell membrane, serving as an ATP-driven molecular motor driving the stepwise translocation of polypeptide chains across the membrane. The protein is Protein translocase subunit SecA of Rhodococcus erythropolis (strain PR4 / NBRC 100887).